Consider the following 306-residue polypeptide: Probable histidinol-phosphatase (306 aa).

This sequence belongs to the PHP hydrolase family. HisK subfamily.

It carries out the reaction L-histidinol phosphate + H2O = L-histidinol + phosphate. It participates in amino-acid biosynthesis; L-histidine biosynthesis; L-histidine from 5-phospho-alpha-D-ribose 1-diphosphate: step 8/9. In Schizosaccharomyces pombe (strain 972 / ATCC 24843) (Fission yeast), this protein is Probable histidinol-phosphatase.